We begin with the raw amino-acid sequence, 288 residues long: uncharacterized protein (288 aa).

NAD(+)-binding positions include 6-20 (GFIGLGVMGKSMASH) and Thr97. Lys172 is a catalytic residue. Position 240 (Lys240) interacts with NAD(+).

This sequence belongs to the HIBADH-related family.

It is found in the cell membrane. Its subcellular location is the membrane raft. This is an uncharacterized protein from Bacillus subtilis (strain 168).